Reading from the N-terminus, the 338-residue chain is Serpentine receptor class alpha-31 (338 aa).

The next 7 membrane-spanning stretches (helical) occupy residues 23–43 (GNHC…VFAI), 59–79 (LLFS…GIRI), 108–125 (LYYY…SLFF), 142–162 (FSKI…YWIF), 188–208 (VNEF…VIFF), 240–260 (VCII…TTEI), and 276–296 (SIAF…IIIY).

Belongs to the nematode receptor-like protein sra family.

The protein localises to the membrane. This chain is Serpentine receptor class alpha-31 (sra-31), found in Caenorhabditis elegans.